A 366-amino-acid polypeptide reads, in one-letter code: MKIADLMTLLDHHVPFSTAESWDNVGLLIGDGDVEVTGVLTALDCTLEVVNEAIEKGYNTIISHHPLIFKGVTSLKANGYGLIIRKLIQHDINLIAMHTNLDVNPYGVNMMLAKAMGLKNISIINNQQDVYYKVQTYIPKDNVGPFKDKLSENGLAQEGNYEYCFFESEGRGQFKPVGEANPTIGQIDKIEDVDEVKIEFMIDAYQKSRAEQLIKQYHPYETPVFDFIEIKQTSLYGLGVMAEVDNQMTLEDFAADIKSKLNIPSVRFVGESNQKIKRIAIIGGSGIGYEYQAVQQGADVFVTGDIKHHDALDAKIHGVNLIDINHYSEYVMKEGLKTLLMNWFNIEKINIDVEASTINTDPFQYI.

Residues His64, His65, Asp102, His326, and Glu329 each coordinate Zn(2+).

It belongs to the GTP cyclohydrolase I type 2/NIF3 family. In terms of assembly, toroid-shaped homohexamer that has a central cavity of about 38 Angstroms diameter.

The sequence is that of GTP cyclohydrolase 1 type 2 homolog from Staphylococcus aureus (strain Mu50 / ATCC 700699).